A 281-amino-acid chain; its full sequence is 3-hydroxyanthranilate 3,4-dioxygenase (281 aa).

The domain A (catalytic) stretch occupies residues 1-162 (MAGVTAIEIP…SNEFKTGKPG (162 aa)). R45 is a binding site for O2. 3 residues coordinate Fe cation: H49, E55, and H93. E55 provides a ligand contact to substrate. Substrate is bound by residues R97 and E107. Residues 163 to 179 (KGTFACNAPYEARWTDL) are linker. Positions 180–281 (PVPINRKEFI…GFAITIRMPG (102 aa)) are domain B.

It belongs to the 3-HAO family. The cofactor is Fe(2+).

The protein localises to the cytoplasm. It carries out the reaction 3-hydroxyanthranilate + O2 = (2Z,4Z)-2-amino-3-carboxymuconate 6-semialdehyde. Its pathway is cofactor biosynthesis; NAD(+) biosynthesis; quinolinate from L-kynurenine: step 3/3. Catalyzes the oxidative ring opening of 3-hydroxyanthranilate to 2-amino-3-carboxymuconate semialdehyde, which spontaneously cyclizes to quinolinate. This Caenorhabditis briggsae protein is 3-hydroxyanthranilate 3,4-dioxygenase (haao-1).